The primary structure comprises 225 residues: Ribose-5-phosphate isomerase A (225 aa).

Substrate contacts are provided by residues 32–35 (TGST), 85–88 (DGAD), and 98–101 (KGGG). The active-site Proton acceptor is the glutamate 107. Lysine 125 contacts substrate.

It belongs to the ribose 5-phosphate isomerase family. As to quaternary structure, homodimer.

The enzyme catalyses aldehydo-D-ribose 5-phosphate = D-ribulose 5-phosphate. It functions in the pathway carbohydrate degradation; pentose phosphate pathway; D-ribose 5-phosphate from D-ribulose 5-phosphate (non-oxidative stage): step 1/1. Catalyzes the reversible conversion of ribose-5-phosphate to ribulose 5-phosphate. This chain is Ribose-5-phosphate isomerase A, found in Marinobacter nauticus (strain ATCC 700491 / DSM 11845 / VT8) (Marinobacter aquaeolei).